The primary structure comprises 339 residues: Glycerol-3-phosphate dehydrogenase [NAD(P)+] (339 aa).

4 residues coordinate NADPH: serine 15, tyrosine 16, histidine 36, and lysine 110. Sn-glycerol 3-phosphate contacts are provided by lysine 110, glycine 139, and threonine 141. Alanine 143 is a binding site for NADPH. Sn-glycerol 3-phosphate is bound by residues lysine 195, aspartate 248, serine 258, arginine 259, and asparagine 260. The active-site Proton acceptor is the lysine 195. Position 259 (arginine 259) interacts with NADPH. Residues valine 283 and glutamate 285 each coordinate NADPH.

This sequence belongs to the NAD-dependent glycerol-3-phosphate dehydrogenase family.

The protein resides in the cytoplasm. It catalyses the reaction sn-glycerol 3-phosphate + NAD(+) = dihydroxyacetone phosphate + NADH + H(+). It carries out the reaction sn-glycerol 3-phosphate + NADP(+) = dihydroxyacetone phosphate + NADPH + H(+). The protein operates within membrane lipid metabolism; glycerophospholipid metabolism. Functionally, catalyzes the reduction of the glycolytic intermediate dihydroxyacetone phosphate (DHAP) to sn-glycerol 3-phosphate (G3P), the key precursor for phospholipid synthesis. The protein is Glycerol-3-phosphate dehydrogenase [NAD(P)+] of Klebsiella pneumoniae (strain 342).